The sequence spans 207 residues: Nitrile hydratase subunit alpha (207 aa).

Fe(3+) is bound by residues Cys-110, Cys-113, Ser-114, and Cys-115. Cys-113 carries the cysteine sulfinic acid (-SO2H) modification. Position 115 is a cysteine sulfenic acid (-SOH) (Cys-115).

This sequence belongs to the nitrile hydratase subunit alpha family. As to quaternary structure, heterodimer of an alpha and a beta chain. It depends on Fe(3+) as a cofactor. Oxidation on Cys-113 is essential for the activity. Post-translationally, oxidation on Cys-115 stabilizes the Fe-NO ligand coordinated in the inactive form.

The catalysed reaction is an aliphatic primary amide = an aliphatic nitrile + H2O. Its activity is regulated as follows. Inactivated by nitrosylation of the iron center in the dark and activated by photo-induced nitric oxide (NO) release. Inactivated by oxidation of Cys-115 to a sulfenic acid. NHase catalyzes the hydration of various nitrile compounds to the corresponding amides. Industrial production of acrylamide is now being developed using some of the enzymes of this class. The sequence is that of Nitrile hydratase subunit alpha (nthA) from Rhodococcus erythropolis (Arthrobacter picolinophilus).